Here is a 381-residue protein sequence, read N- to C-terminus: Chitin deacetylase 8 (381 aa).

The first 18 residues, 1–18 (MKRLSVLCSLLLVAAALG), serve as a signal peptide directing secretion. 2 disulfides stabilise this stretch: Cys-27-Cys-39 and Cys-32-Cys-37. Zn(2+) is bound by residues Asp-63, His-117, and His-121. Disulfide bonds link Cys-86-Cys-335, Cys-211-Cys-216, Cys-240-Cys-246, Cys-343-Cys-365, and Cys-348-Cys-368. Asn-171 carries N-linked (GlcNAc...) asparagine glycosylation.

It belongs to the carbohydrate esterase 4 (CE4) family. Zn(2+) is required as a cofactor. Strongly expressed in the midgut. Has little or no expression in other tissues tested.

Its subcellular location is the secreted. The enzyme catalyses [(1-&gt;4)-N-acetyl-beta-D-glucosaminyl](n) + n H2O = chitosan + n acetate. Hydrolyzes the N-acetamido groups of N-acetyl-D-glucosamine (GlcNAc) residues in chitin. Shows activity towards the chitinous oligomers GlcNAc(3), GlcNAc(4), GlcNAc(5) and GlcNAc(6), but not GlcNAc or GlcNAc(2). Requires the substrate to occupy subsites 0, +1, and +2 for optimum catalysis. The chain is Chitin deacetylase 8 from Bombyx mori (Silk moth).